The sequence spans 448 residues: Trigger factor (448 aa).

Residues 172–257 (GDRVTVDFVG…MKKIEWPHLP (86 aa)) form the PPIase FKBP-type domain.

Belongs to the FKBP-type PPIase family. Tig subfamily.

It localises to the cytoplasm. The enzyme catalyses [protein]-peptidylproline (omega=180) = [protein]-peptidylproline (omega=0). Its function is as follows. Involved in protein export. Acts as a chaperone by maintaining the newly synthesized protein in an open conformation. Functions as a peptidyl-prolyl cis-trans isomerase. In Burkholderia cenocepacia (strain ATCC BAA-245 / DSM 16553 / LMG 16656 / NCTC 13227 / J2315 / CF5610) (Burkholderia cepacia (strain J2315)), this protein is Trigger factor.